The following is a 195-amino-acid chain: uncharacterized protein (195 aa).

Disordered stretches follow at residues 1-54 (MPKG…SNKI) and 173-195 (LAGAARGPSQTGTPVAEEAKPIS). Over residues 7–20 (KPNEKKEELEKFAK) the composition is skewed to basic and acidic residues. Residues 45 to 54 (QNDSSSSNKI) are compositionally biased toward polar residues. A coiled-coil region spans residues 48-97 (SSSSNKIVLSQAEKDLLRTELDKTEEEISTLKQVLSARQKHAAELKRKLG).

This sequence belongs to the TPD52 family.

This is an uncharacterized protein from Caenorhabditis elegans.